Consider the following 228-residue polypeptide: Putative L-ribulose-5-phosphate 4-epimerase UlaF (228 aa).

Substrate contacts are provided by residues Gly-26 to Asn-27, Ser-43 to Gly-44, and Ser-72 to Ser-73. The Zn(2+) site is built by Asp-74, His-93, and His-95. The active-site Proton donor/acceptor is Asp-118. His-167 lines the Zn(2+) pocket. Tyr-225 serves as the catalytic Proton donor/acceptor.

The protein belongs to the aldolase class II family. AraD/FucA subfamily. Zn(2+) serves as cofactor.

It carries out the reaction L-ribulose 5-phosphate = D-xylulose 5-phosphate. It functions in the pathway cofactor degradation; L-ascorbate degradation; D-xylulose 5-phosphate from L-ascorbate: step 4/4. Catalyzes the isomerization of L-ribulose 5-phosphate to D-xylulose 5-phosphate. Is involved in the anaerobic L-ascorbate utilization. The protein is Putative L-ribulose-5-phosphate 4-epimerase UlaF of Shigella boydii serotype 4 (strain Sb227).